A 132-amino-acid chain; its full sequence is MVQDTISDLFIRLKNASHARLERVEGIPYGKYQEEILKVLVREGYIKGYEIEEKEGKKYLSVQLKFGPGKQPVLNEVRLISVPSRRIYAKKNDIPKVMNGLGIAILTTSAGVLSDAEARQKGVGGQIICYVW.

This sequence belongs to the universal ribosomal protein uS8 family. Part of the 30S ribosomal subunit. Contacts proteins S5 and S12.

Its function is as follows. One of the primary rRNA binding proteins, it binds directly to 16S rRNA central domain where it helps coordinate assembly of the platform of the 30S subunit. The polypeptide is Small ribosomal subunit protein uS8 (Coprothermobacter proteolyticus (strain ATCC 35245 / DSM 5265 / OCM 4 / BT)).